Reading from the N-terminus, the 148-residue chain is NADPH-dependent 7-cyano-7-deazaguanine reductase (148 aa).

Cys-50 functions as the Thioimide intermediate in the catalytic mechanism. Residue Asp-57 is the Proton donor of the active site. Substrate-binding positions include 72-74 and 91-92; these read VES and HE.

It belongs to the GTP cyclohydrolase I family. QueF type 1 subfamily.

It is found in the cytoplasm. It catalyses the reaction 7-aminomethyl-7-carbaguanine + 2 NADP(+) = 7-cyano-7-deazaguanine + 2 NADPH + 3 H(+). Its pathway is tRNA modification; tRNA-queuosine biosynthesis. In terms of biological role, catalyzes the NADPH-dependent reduction of 7-cyano-7-deazaguanine (preQ0) to 7-aminomethyl-7-deazaguanine (preQ1). This is NADPH-dependent 7-cyano-7-deazaguanine reductase from Helicobacter pylori (strain ATCC 700392 / 26695) (Campylobacter pylori).